A 293-amino-acid chain; its full sequence is Nucleotide-binding protein BA_5384/GBAA_5384/BAS5004 (293 aa).

14–21 contributes to the ATP binding site; it reads GMSGAGKT. 65-68 is a GTP binding site; sequence DLRG.

It belongs to the RapZ-like family.

Displays ATPase and GTPase activities. This Bacillus anthracis protein is Nucleotide-binding protein BA_5384/GBAA_5384/BAS5004.